We begin with the raw amino-acid sequence, 75 residues long: Large ribosomal subunit protein bL31 (75 aa).

Positions 16, 18, 38, and 41 each coordinate Zn(2+).

It belongs to the bacterial ribosomal protein bL31 family. Type A subfamily. Part of the 50S ribosomal subunit. Zn(2+) serves as cofactor.

In terms of biological role, binds the 23S rRNA. The chain is Large ribosomal subunit protein bL31 from Mycolicibacterium smegmatis (strain ATCC 700084 / mc(2)155) (Mycobacterium smegmatis).